A 629-amino-acid chain; its full sequence is Ribosomal protein S6 kinase 2 beta (629 aa).

Residues 62–321 (FVLLKVLGQG…AEELKRHPFF (260 aa)) enclose the Protein kinase 1 domain. ATP is bound by residues 68 to 76 (LGQGSFGKV) and Lys94. The Proton acceptor role is filled by Asp187. Ser221 carries the post-translational modification Phosphoserine. Residues 322 to 391 (STIDWNKLYR…VAPVLVEEDA (70 aa)) enclose the AGC-kinase C-terminal domain. The residue at position 359 (Thr359) is a Phosphothreonine. Phosphoserine is present on Ser363. Residue Ser380 is modified to Phosphoserine; by autocatalysis. The 214-residue stretch at 416-629 (YTVRETIGVG…PEEILARIGS (214 aa)) folds into the Protein kinase 2 domain. ATP is bound by residues 422-430 (IGVGSYSVC) and Lys445. Asp533 serves as the catalytic Proton acceptor. Residue Thr571 is modified to Phosphothreonine.

It belongs to the protein kinase superfamily. AGC Ser/Thr protein kinase family. S6 kinase subfamily. It depends on Mg(2+) as a cofactor. Post-translationally, autophosphorylated on Ser-380, as part of the activation process.

It carries out the reaction L-seryl-[protein] + ATP = O-phospho-L-seryl-[protein] + ADP + H(+). It catalyses the reaction L-threonyl-[protein] + ATP = O-phospho-L-threonyl-[protein] + ADP + H(+). Activated by multiple phosphorylations on threonine and serine residues. Serine/threonine kinase that may play a role in mediating the growth-factor and stress induced activation of transcription. The sequence is that of Ribosomal protein S6 kinase 2 beta from Xenopus laevis (African clawed frog).